Here is a 421-residue protein sequence, read N- to C-terminus: MDETTLTPDRARQRFRAGLVRPAAGMAPGHAQANLVIVPRELAFDVLLFAPRNPKPCPVLGVLDAGETTGALLPGGDIRTDVPQYVVYENGVEVARPHDITPYWREDLVTVMLGCSFTFEDALQAHGIRLAHIDQGVNVPMYRTSRRCESAGRLSGPLVVSMRPVPAARVADAVRITSRYPAVHGAPVHVGDPGALGSRTWGHRTSATPCGSPPARFPCSGRAGSRRRPRWWSRLRRSPSPTPRATCSSPTPGTPTTRCPDGARERGGRALVHPCGVRSLPTRQPQPRPAVSRGSPVTPVARRRRLWLAALTRAGRGSRPVRHPGSPAATVPPGPGRRTPAPRAPRRCAPRSGRGTPCRRASRGTPGASSRGPGPCPRAAPVRRRPPPAPGGSAGSRPTWRPRRRSPALPAPRTRCPAVSR.

Disordered regions lie at residues 200–298 (TWGH…SPVT) and 312–421 (TRAG…AVSR). The segment covering 224–237 (GSRRRPRWWSRLRR) has biased composition (basic residues). 2 stretches are compositionally biased toward low complexity: residues 243–260 (PRAT…TRCP) and 370–380 (SRGPGPCPRAA).

This sequence belongs to the D-glutamate cyclase family.

The polypeptide is Putative hydro-lyase KRH_21160 (Kocuria rhizophila (strain ATCC 9341 / DSM 348 / NBRC 103217 / DC2201)).